The following is a 71-amino-acid chain: UPF0434 protein APH_0052 (71 aa).

Positions 52–63 are enriched in basic and acidic residues; the sequence is RKLQPEEPKEGS. Residues 52-71 are disordered; that stretch reads RKLQPEEPKEGSELQSSDNQ.

This sequence belongs to the UPF0434 family.

This Anaplasma phagocytophilum (strain HZ) protein is UPF0434 protein APH_0052.